Here is a 640-residue protein sequence, read N- to C-terminus: Kelch-like protein 17 (640 aa).

A disordered region spans residues 1 to 50; that stretch reads MQPRGERPAGRTQSPEHSSPGPGPEAPPPPQPPAPEAERARPRQARPAAP. The span at 21–35 shows a compositional bias: pro residues; sequence GPGPEAPPPPQPPAP. In terms of domain architecture, BTB spans 90–157; sequence CDIVLHVAAK…AYTAEIVVGE (68 aa). The 103-residue stretch at 192–294 folds into the BACK domain; it reads CLGIRGFADT…SRDFLLGHVD (103 aa). The interaction with F-actin stretch occupies residues 287 to 639; that stretch reads DFLLGHVDAE…SPTLSVSSTS (353 aa). Kelch repeat units follow at residues 341–387, 388–434, 436–481, 482–528, 530–575, and 576–622; these read VLFA…AVGN, RLYA…ALHG, LYAA…TLDG, NLYA…VLEG, LYVA…AMDG, and WLYA…VLEL. Positions 638-640 are interaction with PDZK1; that stretch reads TSL.

In terms of assembly, interacts with F-actin; the interaction disrupts the F-actin structures and leads to marked changes of neuronal morphology. Component of a complex, composed of PDZK1, SYNGAP1, KLHL17 and NMDA receptors. Interacts directly with PDZK1 (via PDZ1 domain); the interaction is important for integrity of actin cytoskeleton structures in neurons. Interacts with DLG4 and SYNGAP1. Interacts (via kelch repeats) with GRIK2 (via C-terminus); the interaction targets GRIK2 for degradation via ubiquitin-proteasome pathway. Interacts with GRIK1. Interacts with (via BTB domain) CUL3; the interaction regulates surface GRIK2 expression.

It is found in the postsynaptic density. Its subcellular location is the synapse. Its pathway is protein modification; protein ubiquitination. Substrate-recognition component of some cullin-RING-based BCR (BTB-CUL3-RBX1) E3 ubiquitin-protein ligase complexes. The BCR(KLHL17) complex mediates the ubiquitination and subsequent degradation of GLUR6. May play a role in the actin-based neuronal function. This chain is Kelch-like protein 17 (Klhl17), found in Mus musculus (Mouse).